Reading from the N-terminus, the 782-residue chain is MGKRDRADRDKKKSRKRHYEDEEDDEEDAPGNDPQEAVPSAAGKQVDESGTKVDEYGAKDYRLQMPLKDDHTSRPLWVAPDGHIFLEAFSPVYKYAQDFLVAIAEPVCRPTHVHEYKLTAYSLYAAVSVGLQTSDITEYLRKLSKTGVPDGIMQFIKLCTVSYGKVKLVLKHNRYFVESCHPDVIQHLLQDPVIRECRLRNSEGEATELITETFTSKSAISKTAESSGGPSTSRVTDPQGKSDIPMDLFDFYEQMDKDEEEEEETQTVSFEVKQEMIEELQKRCIHLEYPLLAEYDFRNDSVNPDINIDLKPTAVLRPYQEKSLRKMFGNGRARSGVIVLPCGAGKSLVGVTAACTVRKRCLVLGNSAVSVEQWKAQFKMWSTIDDSQICRFTSDAKDKPIGCSVAISTYSMLGHTTKRSWEAERVMEWLKTQEWGLMILDEVHTIPAKMFRRVLTIVQAHCKLGLTATLVREDDKIVDLNFLIGPKLYEANWMELQNNGYIAKVQCAEVWCPMSPEFYREYVAIKTKKRILLYTMNPNKFRACQFLIKFHERRNDKIIVFADNVFALKEYAIRLNKPYIYGPTSQGERMQILQNFKHNPKINTIFISKVGDTSFDLPEANVLIQISSHGGSRRQEAQRLGRVLRAKKGMVAEEYNAFFYSLVSQDTQEMAYSTKRQRFLVDQGYSFKVITKLAGMEEEDLAFSTKEEQQQLLQKVLAATDLDAEEEVVAGEFGSRSSQASRRFGTMSSMSGADDTVYMEYHSSRSKAPSKHVHPLFKRFRK.

Basic and acidic residues predominate over residues 1–11; sequence MGKRDRADRDK. Disordered stretches follow at residues 1-51 and 218-241; these read MGKR…ESGT and SAIS…PQGK. A Nuclear localization signal motif is present at residues 6 to 18; it reads RADRDKKKSRKRH. Over residues 21–30 the composition is skewed to acidic residues; sequence DEEDDEEDAP. Residues 218–236 are compositionally biased toward polar residues; it reads SAISKTAESSGGPSTSRVT. Residues 327–488 enclose the Helicase ATP-binding domain; that stretch reads MFGNGRARSG…DLNFLIGPKL (162 aa). ATP is bound at residue 340 to 347; it reads LPCGAGKS. Residues 441–444 carry the DEVH box motif; the sequence is DEVH. A Helicase C-terminal domain is found at 542–702; the sequence is RACQFLIKFH…LAGMEEEDLA (161 aa). Arg642 and Arg645 together coordinate ATP. Ser686 is modified (phosphoserine). Ser751 carries the phosphoserine; by CK2 modification.

This sequence belongs to the helicase family. RAD25/XPB subfamily. As to quaternary structure, component of the 7-subunit TFIIH core complex composed of XPB/ERCC3, XPD/ERCC2, GTF2H1, GTF2H2, GTF2H3, GTF2H4 and GTF2H5, which is active in NER. The core complex associates with the 3-subunit CDK-activating kinase (CAK) module composed of CCNH/cyclin H, CDK7 and MNAT1 to form the 10-subunit holoenzyme (holo-TFIIH) active in transcription. Interacts with PUF60. Interacts with ATF7IP. Interacts with KAT2A; leading to KAT2A recruitment to promoters and acetylation of histones. Part of TBP-based Pol II pre-initiation complex (PIC), in which Pol II core assembles with general transcription factors and other specific initiation factors including GTF2E1, GTF2E2, GTF2F1, GTF2F2, TCEA1, ERCC2, ERCC3, GTF2H2, GTF2H3, GTF2H4, GTF2H5, GTF2A1, GTF2A2, GTF2B and TBP; this large multi-subunit PIC complex mediates DNA unwinding and targets Pol II core to the transcription start site where the first phosphodiester bond forms. (Microbial infection) Interacts with Epstein-Barr virus EBNA2. In terms of processing, phosphorylation on Ser-751 by CK2 controls the 5'-excision activity of ERCC1-XPF endonuclease; phosphorylated protein inhibits the excision activity and thus NER. Dephosphorylation reactivates the 5'-excision step. Phosphorylation has no effect on transcription or the 3'-5' helicase activity.

It is found in the nucleus. It carries out the reaction Couples ATP hydrolysis with the unwinding of duplex DNA by translocating in the 3'-5' direction.. The enzyme catalyses ATP + H2O = ADP + phosphate + H(+). Its activity is regulated as follows. Phosphorylation on Ser-751 by CK2 controls the 5'-excision activity of ERCC1-XPF endonuclease; phosphorylated protein inhibits the excision activity and thus NER. ATPase activity is stimulated by TFIIH subunit p52 (GTF2H4). DNA translocase activity by this subunit in TFIIH is stimulated by XPA, ERCC5/XPG and XFP plus ERCC1; translocase activity is sensitive to triptolide which targets this enzyme. In terms of biological role, ATP-dependent 3'-5' DNA helicase/translocase. Binds dsDNA rather than ssDNA, unzipping it in a translocase rather than classical helicase activity. Component of the general transcription and DNA repair factor IIH (TFIIH) core complex. When complexed to CDK-activating kinase (CAK), involved in RNA transcription by RNA polymerase II. The ATPase activity of XPB/ERCC3, but not its helicase activity, is required for DNA opening; it may wrap around the damaged DNA wedging it open, causing localized melting that allows XPD/ERCC2 helicase to anchor. In transcription, TFIIH has an essential role in transcription initiation. When the pre-initiation complex (PIC) has been established, TFIIH is required for promoter opening and promoter escape. The ATP-dependent helicase activity of XPB/ERCC3 is required for promoter opening and promoter escape. In transcription pre-initiation complexes induces and propagates a DNA twist to open DNA. Also involved in transcription-coupled nucleotide excision repair (NER) of damaged DNA. In NER, TFIIH acts by opening DNA around the lesion to allow the excision of the damaged oligonucleotide and its replacement by a new DNA fragment. The structure of the TFIIH transcription complex differs from the NER-TFIIH complex; large movements by XPD/ERCC2 and XPB/ERCC3 are stabilized by XPA. XPA retains XPB/ERCC3 at the 5' end of a DNA bubble (mimicking DNA damage). The chain is General transcription and DNA repair factor IIH helicase/translocase subunit XPB from Homo sapiens (Human).